Consider the following 258-residue polypeptide: Imidazole glycerol phosphate synthase subunit HisF (258 aa).

Active-site residues include Asp12 and Asp131.

This sequence belongs to the HisA/HisF family. Heterodimer of HisH and HisF.

The protein localises to the cytoplasm. The enzyme catalyses 5-[(5-phospho-1-deoxy-D-ribulos-1-ylimino)methylamino]-1-(5-phospho-beta-D-ribosyl)imidazole-4-carboxamide + L-glutamine = D-erythro-1-(imidazol-4-yl)glycerol 3-phosphate + 5-amino-1-(5-phospho-beta-D-ribosyl)imidazole-4-carboxamide + L-glutamate + H(+). It functions in the pathway amino-acid biosynthesis; L-histidine biosynthesis; L-histidine from 5-phospho-alpha-D-ribose 1-diphosphate: step 5/9. Functionally, IGPS catalyzes the conversion of PRFAR and glutamine to IGP, AICAR and glutamate. The HisF subunit catalyzes the cyclization activity that produces IGP and AICAR from PRFAR using the ammonia provided by the HisH subunit. The chain is Imidazole glycerol phosphate synthase subunit HisF from Corynebacterium diphtheriae (strain ATCC 700971 / NCTC 13129 / Biotype gravis).